We begin with the raw amino-acid sequence, 83 residues long: Small ribosomal subunit protein uS17 (83 aa).

It belongs to the universal ribosomal protein uS17 family. As to quaternary structure, part of the 30S ribosomal subunit.

Functionally, one of the primary rRNA binding proteins, it binds specifically to the 5'-end of 16S ribosomal RNA. This Chlamydia trachomatis serovar L2 (strain ATCC VR-902B / DSM 19102 / 434/Bu) protein is Small ribosomal subunit protein uS17.